The chain runs to 257 residues: tRNA pseudouridine synthase A (257 aa).

Catalysis depends on Asp43, which acts as the Nucleophile. Tyr94 contacts substrate.

It belongs to the tRNA pseudouridine synthase TruA family.

The enzyme catalyses uridine(38/39/40) in tRNA = pseudouridine(38/39/40) in tRNA. In terms of biological role, formation of pseudouridine at positions 38, 39 and 40 in the anticodon stem and loop of transfer RNAs. The sequence is that of tRNA pseudouridine synthase A from Pyrobaculum arsenaticum (strain DSM 13514 / JCM 11321 / PZ6).